A 444-amino-acid chain; its full sequence is Phosphoglucosamine mutase (444 aa).

Residue Ser-101 is the Phosphoserine intermediate of the active site. Residues Ser-101, Asp-240, Asp-242, and Asp-244 each contribute to the Mg(2+) site. Ser-101 is modified (phosphoserine).

It belongs to the phosphohexose mutase family. It depends on Mg(2+) as a cofactor. In terms of processing, activated by phosphorylation.

It catalyses the reaction alpha-D-glucosamine 1-phosphate = D-glucosamine 6-phosphate. Catalyzes the conversion of glucosamine-6-phosphate to glucosamine-1-phosphate. In Sphingopyxis alaskensis (strain DSM 13593 / LMG 18877 / RB2256) (Sphingomonas alaskensis), this protein is Phosphoglucosamine mutase.